The primary structure comprises 346 residues: L-threonine 3-dehydrogenase (346 aa).

Residue C42 participates in Zn(2+) binding. Catalysis depends on charge relay system residues T44 and H47. Zn(2+) contacts are provided by H67, E68, C97, C100, C103, and C111. Residues I179, D199, R204, 266–268 (LSL), and 291–292 (IT) each bind NAD(+).

This sequence belongs to the zinc-containing alcohol dehydrogenase family. As to quaternary structure, homotetramer. Requires Zn(2+) as cofactor.

The protein resides in the cytoplasm. It carries out the reaction L-threonine + NAD(+) = (2S)-2-amino-3-oxobutanoate + NADH + H(+). Its pathway is amino-acid degradation; L-threonine degradation via oxydo-reductase pathway; glycine from L-threonine: step 1/2. In terms of biological role, catalyzes the NAD(+)-dependent oxidation of L-threonine to 2-amino-3-ketobutyrate. This chain is L-threonine 3-dehydrogenase, found in Bacillus licheniformis (strain ATCC 14580 / DSM 13 / JCM 2505 / CCUG 7422 / NBRC 12200 / NCIMB 9375 / NCTC 10341 / NRRL NRS-1264 / Gibson 46).